The following is a 685-amino-acid chain: Glycine--tRNA ligase beta subunit (685 aa).

The segment at 58–77 is disordered; it reads GLTAQSPTTREERKGPRTDA. The span at 66-77 shows a compositional bias: basic and acidic residues; the sequence is TREERKGPRTDA.

The protein belongs to the class-II aminoacyl-tRNA synthetase family. As to quaternary structure, tetramer of two alpha and two beta subunits.

The protein localises to the cytoplasm. It catalyses the reaction tRNA(Gly) + glycine + ATP = glycyl-tRNA(Gly) + AMP + diphosphate. This chain is Glycine--tRNA ligase beta subunit, found in Paracoccus denitrificans (strain Pd 1222).